A 107-amino-acid polypeptide reads, in one-letter code: Phosphoribosyl-ATP pyrophosphatase (107 aa).

Belongs to the PRA-PH family.

Its subcellular location is the cytoplasm. The catalysed reaction is 1-(5-phospho-beta-D-ribosyl)-ATP + H2O = 1-(5-phospho-beta-D-ribosyl)-5'-AMP + diphosphate + H(+). Its pathway is amino-acid biosynthesis; L-histidine biosynthesis; L-histidine from 5-phospho-alpha-D-ribose 1-diphosphate: step 2/9. The protein is Phosphoribosyl-ATP pyrophosphatase of Rhizobium johnstonii (strain DSM 114642 / LMG 32736 / 3841) (Rhizobium leguminosarum bv. viciae).